The following is a 308-amino-acid chain: Oxygen-dependent coproporphyrinogen-III oxidase (308 aa).

Ser94 is a binding site for substrate. 2 residues coordinate a divalent metal cation: His98 and His108. Residue His108 is the Proton donor of the active site. 110–112 (NVR) provides a ligand contact to substrate. Residues His147 and His177 each contribute to the a divalent metal cation site. Residues 242–277 (YVEFNLVWDRGTLFGLQTGGRTESILMSMPPLVRWE) form an important for dimerization region. Residue 260-262 (GGR) participates in substrate binding.

This sequence belongs to the aerobic coproporphyrinogen-III oxidase family. Homodimer. The cofactor is a divalent metal cation.

It localises to the cytoplasm. It carries out the reaction coproporphyrinogen III + O2 + 2 H(+) = protoporphyrinogen IX + 2 CO2 + 2 H2O. Its pathway is porphyrin-containing compound metabolism; protoporphyrin-IX biosynthesis; protoporphyrinogen-IX from coproporphyrinogen-III (O2 route): step 1/1. In terms of biological role, involved in the heme biosynthesis. Catalyzes the aerobic oxidative decarboxylation of propionate groups of rings A and B of coproporphyrinogen-III to yield the vinyl groups in protoporphyrinogen-IX. The chain is Oxygen-dependent coproporphyrinogen-III oxidase from Yersinia enterocolitica serotype O:8 / biotype 1B (strain NCTC 13174 / 8081).